The following is a 72-amino-acid chain: Antimicrobial peptide MeuNaTxbeta-4 (72 aa).

The signal sequence occupies residues 1 to 5 (LIGVK). An LCN-type CS-alpha/beta domain is found at 7 to 69 (EHGYLLDKYT…LWHYETNKCN (63 aa)). 4 disulfides stabilise this stretch: C18/C68, C22/C43, C29/C50, and C33/C52.

Expressed by the venom gland.

The protein resides in the secreted. In terms of biological role, antimicrobial peptide with weak activity against both Gram-positive and -negative bacteria. Its antibiotic activity is potentiated by other antibacterial peptides such as Meucin-49. The polypeptide is Antimicrobial peptide MeuNaTxbeta-4 (Mesobuthus eupeus (Lesser Asian scorpion)).